Consider the following 257-residue polypeptide: Isoprenyl transferase 1 (257 aa).

D37 is an active-site residue. Residue D37 participates in Mg(2+) binding. Substrate is bound by residues 38-41 (GNRR), W42, H54, and 82-84 (STD). The active-site Proton acceptor is N85. Substrate is bound by residues F86, R88, R206, and 212–214 (RLS). Position 225 (E225) interacts with Mg(2+).

It belongs to the UPP synthase family. In terms of assembly, homodimer. It depends on Mg(2+) as a cofactor.

Functionally, catalyzes the condensation of isopentenyl diphosphate (IPP) with allylic pyrophosphates generating different type of terpenoids. In Streptomyces avermitilis (strain ATCC 31267 / DSM 46492 / JCM 5070 / NBRC 14893 / NCIMB 12804 / NRRL 8165 / MA-4680), this protein is Isoprenyl transferase 1.